The sequence spans 192 residues: Peptidyl-tRNA hydrolase (192 aa).

Tyr17 serves as a coordination point for tRNA. Catalysis depends on His22, which acts as the Proton acceptor. Residues Phe68, Asn70, and Asn116 each contribute to the tRNA site.

It belongs to the PTH family. In terms of assembly, monomer.

Its subcellular location is the cytoplasm. It catalyses the reaction an N-acyl-L-alpha-aminoacyl-tRNA + H2O = an N-acyl-L-amino acid + a tRNA + H(+). Its function is as follows. Hydrolyzes ribosome-free peptidyl-tRNAs (with 1 or more amino acids incorporated), which drop off the ribosome during protein synthesis, or as a result of ribosome stalling. Functionally, catalyzes the release of premature peptidyl moieties from peptidyl-tRNA molecules trapped in stalled 50S ribosomal subunits, and thus maintains levels of free tRNAs and 50S ribosomes. This chain is Peptidyl-tRNA hydrolase, found in Xylella fastidiosa (strain Temecula1 / ATCC 700964).